The chain runs to 314 residues: DNA-directed RNA polymerase subunit alpha (314 aa).

An alpha N-terminal domain (alpha-NTD) region spans residues 1 to 228 (MIEIEKPKIE…EHLNIFVGLT (228 aa)). An alpha C-terminal domain (alpha-CTD) region spans residues 246 to 314 (EKVLEMTIEE…ELGLGLRKDD (69 aa)).

The protein belongs to the RNA polymerase alpha chain family. As to quaternary structure, homodimer. The RNAP catalytic core consists of 2 alpha, 1 beta, 1 beta' and 1 omega subunit. When a sigma factor is associated with the core the holoenzyme is formed, which can initiate transcription.

The enzyme catalyses RNA(n) + a ribonucleoside 5'-triphosphate = RNA(n+1) + diphosphate. Functionally, DNA-dependent RNA polymerase catalyzes the transcription of DNA into RNA using the four ribonucleoside triphosphates as substrates. In Bacillus pumilus (strain SAFR-032), this protein is DNA-directed RNA polymerase subunit alpha.